Consider the following 283-residue polypeptide: Protein FAM170B (283 aa).

Residues 1-11 (MKCYFTDHRGE) show a composition bias toward basic and acidic residues. 2 disordered regions span residues 1–58 (MKCY…REEG) and 246–283 (AQGQAHDQQLEEEQSPSDNSECSRPQGEVLSAQQQEKQ).

It belongs to the FAM170 family. In terms of assembly, interacts with GOPC. In terms of tissue distribution, exclusively expressed in adult testis.

Its subcellular location is the cytoplasmic vesicle. The protein resides in the secretory vesicle. It is found in the acrosome. It localises to the acrosome outer membrane. Functionally, plays a role in fertilization through the acrosome reaction. The chain is Protein FAM170B from Homo sapiens (Human).